The sequence spans 393 residues: Probable N-acetyl-LL-diaminopimelate aminotransferase (393 aa).

Position 231 is an N6-(pyridoxal phosphate)lysine (Lys231).

Belongs to the class-I pyridoxal-phosphate-dependent aminotransferase family. As to quaternary structure, homodimer. Requires pyridoxal 5'-phosphate as cofactor.

It localises to the cytoplasm. The catalysed reaction is N-acetyl-(2S,6S)-2,6-diaminopimelate + 2-oxoglutarate = L-2-acetamido-6-oxoheptanedioate + L-glutamate. It participates in amino-acid biosynthesis; L-lysine biosynthesis via DAP pathway; LL-2,6-diaminopimelate from (S)-tetrahydrodipicolinate (acetylase route): step 2/3. Its function is as follows. Essential for murein biosynthesis. Probably catalyzes the conversion of L-2-acetamido-6-oxopimelate to N-acetyl-LL-2,6-diaminopimelate. This is Probable N-acetyl-LL-diaminopimelate aminotransferase from Bacillus subtilis (strain 168).